A 100-amino-acid polypeptide reads, in one-letter code: Ferredoxin-2 (100 aa).

The region spanning 4 to 97 (YKVTLINEEE…DCTIMTHQES (94 aa)) is the 2Fe-2S ferredoxin-type domain. The [2Fe-2S] cluster site is built by Cys-42, Cys-47, Cys-50, and Cys-81.

This sequence belongs to the 2Fe2S plant-type ferredoxin family. [2Fe-2S] cluster serves as cofactor.

In terms of biological role, ferredoxins are iron-sulfur proteins that transfer electrons in a wide variety of metabolic reactions. The chain is Ferredoxin-2 from Aphanothece sacrum.